The primary structure comprises 88 residues: Large ribosomal subunit protein uL29 (88 aa).

Belongs to the universal ribosomal protein uL29 family.

This Sulfurisphaera tokodaii (strain DSM 16993 / JCM 10545 / NBRC 100140 / 7) (Sulfolobus tokodaii) protein is Large ribosomal subunit protein uL29 (rpl29).